A 258-amino-acid polypeptide reads, in one-letter code: Imidazole glycerol phosphate synthase subunit HisF (258 aa).

Active-site residues include Asp-11 and Asp-130.

It belongs to the HisA/HisF family. In terms of assembly, heterodimer of HisH and HisF.

Its subcellular location is the cytoplasm. The enzyme catalyses 5-[(5-phospho-1-deoxy-D-ribulos-1-ylimino)methylamino]-1-(5-phospho-beta-D-ribosyl)imidazole-4-carboxamide + L-glutamine = D-erythro-1-(imidazol-4-yl)glycerol 3-phosphate + 5-amino-1-(5-phospho-beta-D-ribosyl)imidazole-4-carboxamide + L-glutamate + H(+). It participates in amino-acid biosynthesis; L-histidine biosynthesis; L-histidine from 5-phospho-alpha-D-ribose 1-diphosphate: step 5/9. IGPS catalyzes the conversion of PRFAR and glutamine to IGP, AICAR and glutamate. The HisF subunit catalyzes the cyclization activity that produces IGP and AICAR from PRFAR using the ammonia provided by the HisH subunit. The chain is Imidazole glycerol phosphate synthase subunit HisF from Edwardsiella ictaluri (strain 93-146).